We begin with the raw amino-acid sequence, 23 residues long: Dermaseptin-4 (23 aa).

A Glutamine amide modification is found at Gln-23.

In terms of tissue distribution, expressed by the skin glands.

Its subcellular location is the secreted. In terms of biological role, antimicrobial peptide, active against the Gram-positive bacterium S.aureus, and the Gram-negative bacteria E.coli and P.aeruginosa. Has hemolytic activity (5% hemolysis at 128 ug/ml). This is Dermaseptin-4 from Phyllomedusa tarsius (Brownbelly leaf frog).